We begin with the raw amino-acid sequence, 1639 residues long: Protein GFS12 (1639 aa).

A Protein kinase 1 domain is found at 206–294 (LEEKSKLRCL…IRPSNILLSD (89 aa)). A BEACH domain is found at 336-608 (LKISSHLDWQ…FHGFGVDNKR (273 aa)). In terms of domain architecture, Protein kinase 2 spans 715-788 (IAGDIFSIGC…AKSLLDSPYF (74 aa)). 2 WD repeats span residues 1290–1333 (AHHG…CVSS) and 1336–1373 (AHEE…LISL). Residues 1377–1398 (SPSDQDQASSDPSSKNNSNPCN) show a composition bias toward low complexity. A disordered region spans residues 1377-1399 (SPSDQDQASSDPSSKNNSNPCNR). WD repeat units follow at residues 1465 to 1499 (ALCS…RLFD), 1511 to 1549 (AHDG…TPQP), and 1609 to 1639 (RVKS…RICC).

This sequence belongs to the protein kinase superfamily. Tyr protein kinase family. As to quaternary structure, interacts (via protein kinase 2 domain) with BCHC1 (via PH-BEACH domain). In terms of tissue distribution, weakly expressed in the cotyledons of germinating seedlings. Restricted to the vascular tissues of cotyledons. Detected in root tips, apical meristem, young flower buds and receptacles.

Its function is as follows. May act predominantly to suppress BCHC1, which itself is a negative factor in protein storage vacuole (PSV) trafficking regulation and plant effector triggered immunity (ETI). Required for ETI, but not for cell death. The sequence is that of Protein GFS12 from Arabidopsis thaliana (Mouse-ear cress).